A 311-amino-acid polypeptide reads, in one-letter code: Aspartate carbamoyltransferase catalytic subunit (311 aa).

Arg59 and Thr60 together coordinate carbamoyl phosphate. Residue Lys87 participates in L-aspartate binding. Carbamoyl phosphate is bound by residues Arg109, His139, and Gln142. L-aspartate contacts are provided by Arg172 and Arg224. Positions 265 and 266 each coordinate carbamoyl phosphate.

This sequence belongs to the aspartate/ornithine carbamoyltransferase superfamily. ATCase family. Heterododecamer (2C3:3R2) of six catalytic PyrB chains organized as two trimers (C3), and six regulatory PyrI chains organized as three dimers (R2).

It catalyses the reaction carbamoyl phosphate + L-aspartate = N-carbamoyl-L-aspartate + phosphate + H(+). It participates in pyrimidine metabolism; UMP biosynthesis via de novo pathway; (S)-dihydroorotate from bicarbonate: step 2/3. In terms of biological role, catalyzes the condensation of carbamoyl phosphate and aspartate to form carbamoyl aspartate and inorganic phosphate, the committed step in the de novo pyrimidine nucleotide biosynthesis pathway. This chain is Aspartate carbamoyltransferase catalytic subunit, found in Streptococcus pyogenes serotype M18 (strain MGAS8232).